The chain runs to 62 residues: Cecropin-D (62 aa).

The signal sequence occupies residues methionine 1 to alanine 22. A propeptide spans alanine 23–proline 24 (removed by a dipeptidylpeptidase). Lysine 60 carries the lysine amide modification.

This sequence belongs to the cecropin family.

Its subcellular location is the secreted. Cecropins have lytic and antibacterial activity against several Gram-positive and Gram-negative bacteria. The sequence is that of Cecropin-D from Hyalophora cecropia (Cecropia moth).